Consider the following 517-residue polypeptide: MFSLQDLCRKHLFILPDVFGEHVLQRLGLYWRCHGSLQRVGDDHILIRRDLILSTNEALRMAGEEGNNEVVKLLLLWKGNLHYAIIGALQGDQYDLIHKYENQIGDFHLILPLIQDAKTFEKCHALERFCGVSCLLEHATKYNMLPILQTYQEELSMRAYLRETLFELACLWQRYDVLKWIEQTMHVYDLKIMFNIAISKRDLTMYSLGYILLFDRENTEATLLTQHLEKTAAKGLLYFVLETLKYGGNIDIVLTQAVKYNHRKLLDYFLRQLPRKHIEKLLLLAVQEKASKKTLNLLLSHLNYSVKRIKKLLRYVIEYESTLVIKILLKKRVNLIDAMLEKMVRYFSATKVRTIMDELLISPERVIKMAIQKMRTDIVIHTSYVWEDDLERLTRLKNMVYTIKYEHGKKMLIKVMHGIYKNLLYDEREKVMFHLAKLYVAQNAATQFRDICKDCYKLDVARFKPRFKQLMLDCLEIVTKKSCYSILEILEKHIISLFTMKVMTEEEKNLCLEILYK.

This sequence belongs to the asfivirus MGF 505 family.

In terms of biological role, plays a role in virus cell tropism, and may be required for efficient virus replication in macrophages. This Ornithodoros (relapsing fever ticks) protein is Protein MGF 505-2R.